Consider the following 446-residue polypeptide: Histidine--tRNA ligase (446 aa).

The protein belongs to the class-II aminoacyl-tRNA synthetase family. In terms of assembly, homodimer.

It is found in the cytoplasm. It catalyses the reaction tRNA(His) + L-histidine + ATP = L-histidyl-tRNA(His) + AMP + diphosphate + H(+). This chain is Histidine--tRNA ligase, found in Burkholderia vietnamiensis (strain G4 / LMG 22486) (Burkholderia cepacia (strain R1808)).